The chain runs to 112 residues: MYHYKLGRRKDHREAMLRNLVTSLLKEGKIITTEARGKSAKAVAEKLITLAKNDTLHNRRQALAYLYEENVVRKLFKEIGPKYADRPGGYTRIVKIGPRRGDGAMMVLVELL.

Belongs to the bacterial ribosomal protein bL17 family. As to quaternary structure, part of the 50S ribosomal subunit. Contacts protein L32.

This Carboxydothermus hydrogenoformans (strain ATCC BAA-161 / DSM 6008 / Z-2901) protein is Large ribosomal subunit protein bL17.